The sequence spans 318 residues: Methionine import ATP-binding protein MetN (318 aa).

Residues 2–237 (IEIKDVGKIF…PEGELKKIIE (236 aa)) form the ABC transporter domain. Position 34–41 (34–41 (GRSGAGKS)) interacts with ATP.

It belongs to the ABC transporter superfamily. Methionine importer (TC 3.A.1.24) family. In terms of assembly, the complex is composed of two ATP-binding proteins (MetN), two transmembrane proteins (MetI) and a solute-binding protein (MetQ).

Its subcellular location is the cell membrane. It catalyses the reaction L-methionine(out) + ATP + H2O = L-methionine(in) + ADP + phosphate + H(+). It carries out the reaction D-methionine(out) + ATP + H2O = D-methionine(in) + ADP + phosphate + H(+). Functionally, part of the ABC transporter complex MetNIQ involved in methionine import. Responsible for energy coupling to the transport system. In Clostridium tetani (strain Massachusetts / E88), this protein is Methionine import ATP-binding protein MetN.